A 290-amino-acid polypeptide reads, in one-letter code: MSRSGARVERVPLARYTTLGVGGESEMWFVETHEQLAEAMSAPYRILGGGSNLVVSDSGVPERVLRLSGPLAERDLTPDPELSTPDLIVTGWVGGGVPLPGLIRALQKLGWSGLEGTVGIPGQVGGSVWMNAGTRFGEMFDGLHTIEIVTPDGVRQVTPDDLKWGYRQSGIPRGHVVSRVRLKLRPSTPEAVLAKMEHADQARKGQPKNKTPGCAFKNPGGVSAGKLIDEAGLKGTQVGNARIAPEHGNFIVNLGGATAADVHALLALIRERVGVPLELEYELWPEQLGG.

In terms of domain architecture, FAD-binding PCMH-type spans 20-187 (GVGGESEMWF…SRVRLKLRPS (168 aa)). Arg167 is an active-site residue.

The protein belongs to the MurB family. It depends on FAD as a cofactor.

The protein resides in the cytoplasm. The enzyme catalyses UDP-N-acetyl-alpha-D-muramate + NADP(+) = UDP-N-acetyl-3-O-(1-carboxyvinyl)-alpha-D-glucosamine + NADPH + H(+). Its pathway is cell wall biogenesis; peptidoglycan biosynthesis. Functionally, cell wall formation. This is UDP-N-acetylenolpyruvoylglucosamine reductase from Deinococcus radiodurans (strain ATCC 13939 / DSM 20539 / JCM 16871 / CCUG 27074 / LMG 4051 / NBRC 15346 / NCIMB 9279 / VKM B-1422 / R1).